A 255-amino-acid polypeptide reads, in one-letter code: Keratin-associated protein 10-2 (255 aa).

Tandem repeats lie at residues 26–30, 36–40, 57–61, 79–83, 89–93, 99–103, 104–108, 109–113, 114–118, 120–124, 130–134, 145–149, 150–154, 162–166, 172–176, 182–186, 187–191, 192–196, 197–201, 209–213, 219–223, and 224–228. A 22 X 5 AA repeats of C-C-X(3) region spans residues 26-228; it reads CCELPCGTPS…CCTSSCCRPS (203 aa).

It belongs to the KRTAP type 10 family. As to quaternary structure, interacts with hair keratins. In terms of tissue distribution, restricted to a narrow region of the hair fiber cuticle, lying approximately 20 cell layers above the apex of the dermal papilla of the hair root; not detected in any other tissues.

Functionally, in the hair cortex, hair keratin intermediate filaments are embedded in an interfilamentous matrix, consisting of hair keratin-associated proteins (KRTAP), which are essential for the formation of a rigid and resistant hair shaft through their extensive disulfide bond cross-linking with abundant cysteine residues of hair keratins. The matrix proteins include the high-sulfur and high-glycine-tyrosine keratins. The polypeptide is Keratin-associated protein 10-2 (KRTAP10-2) (Homo sapiens (Human)).